Reading from the N-terminus, the 328-residue chain is MVKRLVVTAGEPAGIGPDLVLALSKEHWPHQLVVCADKKMLAQRAEQLGINVTLLDYDASTAPSPQQAGTLVVEHIDMPSTCVAGQLNEENGHYVLKTLERAALGCMKSEFDAIVTGPVHKGVINRAGVAFSGHTEFFAELSNTPLVVMMLATEGLRVALVTTHIPLAYVSKAVTAERLLKIIDILHRDLVEKFAIAEPKIYVCGLNPHAGEDGCLGREEIETITPTLEKIRQEKGIHLLGPLPADTIFNEKYLNDADAVLGMYHDQVLPVLKYKGFGQSVNITLGLPFIRTSVDHGTALDLAGTGQADTGSFRTALQHAIELVEKKQ.

The substrate site is built by His-134 and Thr-135. A divalent metal cation is bound by residues His-164, His-209, and His-265. Substrate is bound by residues Lys-273, Asn-282, and Arg-291.

It belongs to the PdxA family. As to quaternary structure, homodimer. The cofactor is Zn(2+). Requires Mg(2+) as cofactor. Co(2+) is required as a cofactor.

Its subcellular location is the cytoplasm. The enzyme catalyses 4-(phosphooxy)-L-threonine + NAD(+) = 3-amino-2-oxopropyl phosphate + CO2 + NADH. It functions in the pathway cofactor biosynthesis; pyridoxine 5'-phosphate biosynthesis; pyridoxine 5'-phosphate from D-erythrose 4-phosphate: step 4/5. In terms of biological role, catalyzes the NAD(P)-dependent oxidation of 4-(phosphooxy)-L-threonine (HTP) into 2-amino-3-oxo-4-(phosphooxy)butyric acid which spontaneously decarboxylates to form 3-amino-2-oxopropyl phosphate (AHAP). The sequence is that of 4-hydroxythreonine-4-phosphate dehydrogenase from Vibrio vulnificus (strain CMCP6).